The primary structure comprises 450 residues: Phosphoglucosamine mutase (450 aa).

S102 functions as the Phosphoserine intermediate in the catalytic mechanism. Positions 102, 243, 245, and 247 each coordinate Mg(2+). S102 carries the phosphoserine modification.

Belongs to the phosphohexose mutase family. Mg(2+) serves as cofactor. Post-translationally, activated by phosphorylation.

It catalyses the reaction alpha-D-glucosamine 1-phosphate = D-glucosamine 6-phosphate. Its function is as follows. Catalyzes the conversion of glucosamine-6-phosphate to glucosamine-1-phosphate. This chain is Phosphoglucosamine mutase, found in Rhizobium johnstonii (strain DSM 114642 / LMG 32736 / 3841) (Rhizobium leguminosarum bv. viciae).